We begin with the raw amino-acid sequence, 219 residues long: Protein-L-isoaspartate O-methyltransferase (219 aa).

Ser60 is an active-site residue.

This sequence belongs to the methyltransferase superfamily. L-isoaspartyl/D-aspartyl protein methyltransferase family.

It is found in the cytoplasm. It catalyses the reaction [protein]-L-isoaspartate + S-adenosyl-L-methionine = [protein]-L-isoaspartate alpha-methyl ester + S-adenosyl-L-homocysteine. Functionally, catalyzes the methyl esterification of L-isoaspartyl residues in peptides and proteins that result from spontaneous decomposition of normal L-aspartyl and L-asparaginyl residues. It plays a role in the repair and/or degradation of damaged proteins. This is Protein-L-isoaspartate O-methyltransferase from Rhodospirillum rubrum (strain ATCC 11170 / ATH 1.1.1 / DSM 467 / LMG 4362 / NCIMB 8255 / S1).